The following is a 362-amino-acid chain: sn-glycerol-3-phosphate import ATP-binding protein UgpC (362 aa).

One can recognise an ABC transporter domain in the interval 4-235 (LSFRNVKKTY…PASTFVAGFI (232 aa)). ATP is bound at residue 37–44 (GPSGCGKS).

This sequence belongs to the ABC transporter superfamily. sn-glycerol-3-phosphate importer (TC 3.A.1.1.3) family. In terms of assembly, the complex is composed of two ATP-binding proteins (UgpC), two transmembrane proteins (UgpA and UgpE) and a solute-binding protein (UgpB).

Its subcellular location is the cell inner membrane. The enzyme catalyses sn-glycerol 3-phosphate(out) + ATP + H2O = sn-glycerol 3-phosphate(in) + ADP + phosphate + H(+). Part of the ABC transporter complex UgpBAEC involved in sn-glycerol-3-phosphate (G3P) import. Responsible for energy coupling to the transport system. The chain is sn-glycerol-3-phosphate import ATP-binding protein UgpC from Bordetella pertussis (strain Tohama I / ATCC BAA-589 / NCTC 13251).